The primary structure comprises 391 residues: Putative gustatory receptor 36b (391 aa).

Residues 1–4 (MVDW) are Cytoplasmic-facing. Residues 5-25 (VVLLLKAVHIYCYLIGLSNFE) form a helical membrane-spanning segment. Residues 26–39 (FDCRTGRVFKSRRC) lie on the Extracellular side of the membrane. Residues 40-60 (TIYAFMANIFILITIIYNFTA) form a helical membrane-spanning segment. Residues 61 to 74 (HGDTNLLFQSANKL) lie on the Cytoplasmic side of the membrane. Residues 75 to 95 (HEYVIIIMSGLKIVAGLITVL) traverse the membrane as a helical segment. At 96–127 (NRWLQRGQMMQLVKDVIRLYMINPQLKSMIRW) the chain is on the extracellular side. Residues 128 to 148 (GILLKAFISFAIELLQVTLSV) form a helical membrane-spanning segment. The Cytoplasmic portion of the chain corresponds to 149-165 (DALDRQGTAEMMGLLVK). Residues 166-186 (LCVSFIMNLAISQHFLVILLI) form a helical membrane-spanning segment. Over 187–284 (RAQYRIMNAK…YKYGPHNLKL (98 aa)) the chain is Extracellular. Residues 285-305 (SAKTSIIVCILITLFYLDALV) traverse the membrane as a helical segment. Topologically, residues 306-363 (NCNNMLRVLDHHKDFLGLLEERTVFASSLDIRLEESFESLQLQLARNPLKINVMGMFP) are cytoplasmic. A helical membrane pass occupies residues 364-384 (ITRGSTAAMCASVIVNSIFLI). The Extracellular portion of the chain corresponds to 385–391 (QFDMEFF).

The protein belongs to the insect chemoreceptor superfamily. Gustatory receptor (GR) family. Gr22e subfamily. In terms of tissue distribution, expressed in neurons of the terminal external chemosensory organ of larvae.

Its subcellular location is the cell membrane. Its function is as follows. Probable gustatory receptor which mediates acceptance or avoidance behavior, depending on its substrates. This Drosophila melanogaster (Fruit fly) protein is Putative gustatory receptor 36b (Gr36b).